The following is a 601-amino-acid chain: Glutathione-regulated potassium-efflux system protein KefB (601 aa).

The next 13 helical transmembrane spans lie at 4–24, 29–49, 55–75, 87–107, 115–135, 152–172, 177–197, 207–227, 230–250, 268–288, 291–311, 324–344, and 356–376; these read SDFL…VPLA, IGAV…GLGF, EILH…GLEL, IFGV…GLLM, AAVV…LQLM, VLLF…LLAG, HFDW…LIGG, FIAA…LVLG, LFMD…GVLL, GLLL…GVLY, LLWV…VLYL, MQFA…FSTA, and ALLL…MKLV. The region spanning 400–519 is the RCK N-terminal domain; the sequence is KPQVIVVGFG…AGVTQFSRET (120 aa).

It belongs to the monovalent cation:proton antiporter 2 (CPA2) transporter (TC 2.A.37) family. KefB subfamily. As to quaternary structure, interacts with the regulatory subunit KefG.

It localises to the cell inner membrane. Pore-forming subunit of a potassium efflux system that confers protection against electrophiles. Catalyzes K(+)/H(+) antiport. The protein is Glutathione-regulated potassium-efflux system protein KefB of Escherichia coli O17:K52:H18 (strain UMN026 / ExPEC).